The chain runs to 302 residues: Ribose-5-phosphate isomerase (302 aa).

Belongs to the ribose 5-phosphate isomerase family.

The protein localises to the cytoplasm. The enzyme catalyses aldehydo-D-ribose 5-phosphate = D-ribulose 5-phosphate. It functions in the pathway carbohydrate degradation; pentose phosphate pathway; D-ribose 5-phosphate from D-ribulose 5-phosphate (non-oxidative stage): step 1/1. This chain is Ribose-5-phosphate isomerase (RKI1), found in Cryptococcus neoformans var. neoformans serotype D (strain B-3501A) (Filobasidiella neoformans).